Here is a 331-residue protein sequence, read N- to C-terminus: Ubiquinone biosynthesis protein UbiU (331 aa).

[4Fe-4S] cluster contacts are provided by Cys-169, Cys-176, Cys-193, and Cys-232.

This sequence belongs to the peptidase U32 family. UbiU subfamily. Forms a heterodimer with UbiV. [4Fe-4S] cluster serves as cofactor.

It functions in the pathway cofactor biosynthesis; ubiquinone biosynthesis. Required for O(2)-independent ubiquinone (coenzyme Q) biosynthesis. Together with UbiV, is essential for the C6-hydroxylation reaction in the oxygen-independent ubiquinone biosynthesis pathway. The protein is Ubiquinone biosynthesis protein UbiU of Escherichia coli (strain K12).